The chain runs to 408 residues: Broad specificity amino-acid racemase (408 aa).

The first 21 residues, Met-1–Ala-21, serve as a signal peptide directing secretion. Cys-70 and Cys-96 are disulfide-bonded. Lys-74 functions as the Proton acceptor in the catalytic mechanism. Position 74 is an N6-(pyridoxal phosphate)lysine (Lys-74). Arg-173 contacts substrate. Tyr-300 functions as the Proton acceptor in the catalytic mechanism. Met-348 is a substrate binding site.

It belongs to the alanine racemase family. Bsr subfamily. In terms of assembly, homodimer. Pyridoxal 5'-phosphate is required as a cofactor.

It localises to the periplasm. The enzyme catalyses an L-alpha-amino acid = a D-alpha-amino acid. It catalyses the reaction L-lysine = D-lysine. It carries out the reaction L-arginine = D-arginine. The catalysed reaction is L-alanine = D-alanine. The enzyme catalyses L-serine = D-serine. It catalyses the reaction L-methionine = D-methionine. It carries out the reaction L-leucine = D-leucine. The catalysed reaction is L-cysteine = D-cysteine. The enzyme catalyses L-glutamine = D-glutamine. It catalyses the reaction L-asparagine = D-asparagine. It carries out the reaction L-histidine = D-histidine. In terms of biological role, amino-acid racemase able to utilize a broad range of substrates. Reversibly racemizes ten of the 19 natural chiral amino acids known, including both non-beta-branched aliphatic amino acids (Ala, Leu, Met, Ser, Cys, Gln and Asn) and positively charged amino acids (His, Lys and Arg). Is not active on negatively charged (Glu and Asp) or aromatic (Tyr, Trp and Phe) amino acids and displays minimal activity towards beta-branched aliphatic (Ile, Val and Thr) substrates. Enables bacteria to produce and release extracellular non-canonical D-amino acids (NCDAAs) that regulate diverse cellular processes. This Aeromonas hydrophila subsp. hydrophila (strain ATCC 7966 / DSM 30187 / BCRC 13018 / CCUG 14551 / JCM 1027 / KCTC 2358 / NCIMB 9240 / NCTC 8049) protein is Broad specificity amino-acid racemase.